Here is a 266-residue protein sequence, read N- to C-terminus: Translation initiation factor 2 subunit alpha (266 aa).

The 72-residue stretch at 10–81 (GELVVGKIDE…SAQQIDLSIK (72 aa)) folds into the S1 motif domain. Residues 233–266 (AEDALEESADRAAKVVEQHGGSGQFHRERSEDDE) are disordered. Composition is skewed to basic and acidic residues over residues 240-249 (SADRAAKVVE) and 257-266 (FHRERSEDDE).

It belongs to the eIF-2-alpha family. In terms of assembly, heterotrimer composed of an alpha, a beta and a gamma chain.

In terms of biological role, eIF-2 functions in the early steps of protein synthesis by forming a ternary complex with GTP and initiator tRNA. This is Translation initiation factor 2 subunit alpha from Haloarcula marismortui (strain ATCC 43049 / DSM 3752 / JCM 8966 / VKM B-1809) (Halobacterium marismortui).